The chain runs to 322 residues: Cysteine synthase (322 aa).

Hydrogen sulfide-binding residues include asparagine 8 and arginine 35. Residue lysine 42 is modified to N6-(pyridoxal phosphate)lysine. Pyridoxal 5'-phosphate-binding positions include asparagine 72 and 177-181 (GTGGT). Residue leucine 269 participates in hydrogen sulfide binding. A pyridoxal 5'-phosphate-binding site is contributed by serine 273.

It belongs to the cysteine synthase/cystathionine beta-synthase family. In terms of assembly, homodimer. Pyridoxal 5'-phosphate is required as a cofactor.

The catalysed reaction is O-acetyl-L-serine + hydrogen sulfide = L-cysteine + acetate. The protein operates within amino-acid biosynthesis; L-cysteine biosynthesis; L-cysteine from L-serine: step 2/2. The sequence is that of Cysteine synthase (cysK) from Buchnera aphidicola subsp. Schizaphis graminum (strain Sg).